The sequence spans 373 residues: Indole glucosinolate O-methyltransferase 1 (373 aa).

The S-adenosyl-L-homocysteine site is built by G217, D240, D260, M261, and K274. Catalysis depends on H278, which acts as the Proton acceptor.

Belongs to the class I-like SAM-binding methyltransferase superfamily. Cation-independent O-methyltransferase family. As to quaternary structure, interacts with B'GAMMA.

It functions in the pathway secondary metabolite biosynthesis. Its function is as follows. Involved in indole glucosinolate biosynthesis. Catalyzes methoxylation reactions of the glucosinolate indole ring. Converts the hydroxy intermediates 4-hydroxy-indol-3-yl-methylglucosinolate (4OH-I3M) and 1-hydroxy-indol-3-yl-methylglucosinolate (1OH-I3M) to 4-methoxy-indol-3-yl-methylglucosinolate (4MO-I3M) and 1-methoxy-indol-3-yl-methylglucosinolate (1MO-I3M), respectively. The polypeptide is Indole glucosinolate O-methyltransferase 1 (Arabidopsis thaliana (Mouse-ear cress)).